Reading from the N-terminus, the 202-residue chain is uncharacterized protein (202 aa).

3 consecutive transmembrane segments (helical) span residues 34–54 (AAYV…QARI), 102–122 (MGVA…PLVI), and 125–145 (ILPL…FNKA). Residues 165 to 202 (NKPAAAVTGTSSNSNNASAKSDGPTITELNENETEKSS) are disordered. Positions 168–185 (AAAVTGTSSNSNNASAKS) are enriched in low complexity. A phosphoserine mark is found at Ser-185 and Ser-201.

Belongs to the PHO88 family.

It localises to the endoplasmic reticulum membrane. This is an uncharacterized protein from Schizosaccharomyces pombe (strain 972 / ATCC 24843) (Fission yeast).